Consider the following 242-residue polypeptide: MRTGVIAKKVGMTRLFQEDGRHVPVTVLKLEDVQVVAVKNKDQDGYVAVQLGAGSAKAKNVTKPVRGHFAKAEVELKAKLVEFPVSEDAVLEVGTSISADHFIAGQLVDISGQTQGKGFAGAMKRWGFGGLRATHGVSLSHRSHGSTGNRQDPGRVFKNKKMAGHMGARQRTQQNLEVISTDAERDLIFVRGSVPGSKGAWLIIRDAVKVARPTDAPYPAAIKAANGNEAPAAPVAAEGQEG.

An N5-methylglutamine modification is found at glutamine 151.

Belongs to the universal ribosomal protein uL3 family. As to quaternary structure, part of the 50S ribosomal subunit. Forms a cluster with proteins L14 and L19. Post-translationally, methylated by PrmB.

Its function is as follows. One of the primary rRNA binding proteins, it binds directly near the 3'-end of the 23S rRNA, where it nucleates assembly of the 50S subunit. The protein is Large ribosomal subunit protein uL3 of Zymomonas mobilis subsp. mobilis (strain ATCC 31821 / ZM4 / CP4).